Consider the following 566-residue polypeptide: Glutamate--tRNA ligase (566 aa).

Residues 93–103 (PNPDYTIHLGN) carry the 'HIGH' region motif.

This sequence belongs to the class-I aminoacyl-tRNA synthetase family. Glutamate--tRNA ligase type 2 subfamily.

It localises to the cytoplasm. It catalyses the reaction tRNA(Glu) + L-glutamate + ATP = L-glutamyl-tRNA(Glu) + AMP + diphosphate. Its function is as follows. Catalyzes the attachment of glutamate to tRNA(Glu) in a two-step reaction: glutamate is first activated by ATP to form Glu-AMP and then transferred to the acceptor end of tRNA(Glu). This chain is Glutamate--tRNA ligase, found in Staphylothermus marinus (strain ATCC 43588 / DSM 3639 / JCM 9404 / F1).